The following is a 218-amino-acid chain: MNVEDEVDLMKKMIIGRKIGMTQVFAEDGAAIPVTAIEVEPSVITQKKTVEKDGYDAIQLGYGRIKQNKATKPLQGHFAKADKGCFRILKEMRCDQIQEYELGQEITLDIFESGEMVDITGTTKGKGFAGVIKRHGFRGGRSSHGSMFHRAPGSIGASAYPSRVFKGKKLPGQMGNKQKTVKNLMIWSLRPERNLILIRGAVPGARNGYLFIKQSAKA.

Belongs to the universal ribosomal protein uL3 family. In terms of assembly, part of the 50S ribosomal subunit. Forms a cluster with proteins L14 and L19.

In terms of biological role, one of the primary rRNA binding proteins, it binds directly near the 3'-end of the 23S rRNA, where it nucleates assembly of the 50S subunit. In Syntrophus aciditrophicus (strain SB), this protein is Large ribosomal subunit protein uL3.